We begin with the raw amino-acid sequence, 367 residues long: Lysophosphatidic acid receptor 5 (367 aa).

Residues 1–25 (MQANSSAKSLPTECPDYQPIHHLHL) are Extracellular-facing. Asn-4 is a glycosylation site (N-linked (GlcNAc...) asparagine). Residues 26–46 (VVYSVVLAAGLPLNALALWVF) form a helical membrane-spanning segment. The Cytoplasmic segment spans residues 47–54 (LRALRVHS). Residues 55-75 (VVSVYMCNLAASDLLFTLSLP) form a helical membrane-spanning segment. The Extracellular portion of the chain corresponds to 76–95 (LRLSYYARHYWPFPDFLCQL). A disulfide bond links Cys-93 and Cys-174. The helical transmembrane segment at 96 to 116 (AGAVFQMNMYGSCIFLTLINV) threads the bilayer. Residues 117-135 (DRYAAIVHPLRLRHLRRPR) lie on the Cytoplasmic side of the membrane. A helical transmembrane segment spans residues 136-156 (VARLLCLGVWALILVFAVPTI). Residues 157 to 186 (LAHQPSSCARDGRNVSLCFESFSDKLWKGS) are Extracellular-facing. Asn-170 carries N-linked (GlcNAc...) asparagine glycosylation. The chain crosses the membrane as a helical span at residues 187–207 (LLPLLLLAEALGFLLPLAAVV). The Cytoplasmic segment spans residues 208–238 (YSSGRVFWTLARPDATRSQRRRKTVRLLLAS). The chain crosses the membrane as a helical span at residues 239–259 (LVIFLLCFVPYNATLAVYGLL). The Extracellular portion of the chain corresponds to 260 to 275 (RGEVVPASSEARKKVR). Residues 276–296 (GVLMVMVLLAGANCVLDPLVY) traverse the membrane as a helical segment. The Cytoplasmic portion of the chain corresponds to 297–367 (YFSAEGFRNT…FTPSHEDSSF (71 aa)). Low complexity predominate over residues 332–350 (LTETAHASTLTTTSQGQLQ). Positions 332–367 (LTETAHASTLTTTSQGQLQPSDPRSSFTPSHEDSSF) are disordered. Residues 351–360 (PSDPRSSFTP) are compositionally biased toward polar residues.

The protein belongs to the G-protein coupled receptor 1 family.

The protein localises to the cell membrane. Its function is as follows. Receptor for lysophosphatidic acid (LPA), a mediator of diverse cellular activities. This chain is Lysophosphatidic acid receptor 5 (LPAR5), found in Bos taurus (Bovine).